The following is a 146-amino-acid chain: Cytochrome c oxidase subunit 5A, mitochondrial (146 aa).

The transit peptide at 1-37 (MLAAALRRCTAAAAARGLLHPVSAPSPAAAVCSIRCY) directs the protein to the mitochondrion. The SIFI-degron motif lies at 2–16 (LAAALRRCTAAAAAR). Residues lysine 83 and lysine 109 each carry the N6-acetyllysine modification. Phosphothreonine is present on threonine 137.

Component of the cytochrome c oxidase (complex IV, CIV), a multisubunit enzyme composed of 14 subunits. The complex is composed of a catalytic core of 3 subunits MT-CO1, MT-CO2 and MT-CO3, encoded in the mitochondrial DNA, and 11 supernumerary subunits COX4I, COX5A, COX5B, COX6A, COX6B, COX6C, COX7A, COX7B, COX7C, COX8 and NDUFA4, which are encoded in the nuclear genome. The complex exists as a monomer or a dimer and forms supercomplexes (SCs) in the inner mitochondrial membrane with NADH-ubiquinone oxidoreductase (complex I, CI) and ubiquinol-cytochrome c oxidoreductase (cytochrome b-c1 complex, complex III, CIII), resulting in different assemblies (supercomplex SCI(1)III(2)IV(1) and megacomplex MCI(2)III(2)IV(2)). Interacts with AFG1L. Interacts with RAB5IF. Post-translationally, in response to mitochondrial stress, the precursor protein is ubiquitinated by the SIFI complex in the cytoplasm before mitochondrial import, leading to its degradation. Within the SIFI complex, UBR4 initiates ubiquitin chain that are further elongated or branched by KCMF1. As to expression, expressed in the head of epididymal sperm but not in testicular sperm (at protein level).

Its subcellular location is the mitochondrion inner membrane. It functions in the pathway energy metabolism; oxidative phosphorylation. Functionally, component of the cytochrome c oxidase, the last enzyme in the mitochondrial electron transport chain which drives oxidative phosphorylation. The respiratory chain contains 3 multisubunit complexes succinate dehydrogenase (complex II, CII), ubiquinol-cytochrome c oxidoreductase (cytochrome b-c1 complex, complex III, CIII) and cytochrome c oxidase (complex IV, CIV), that cooperate to transfer electrons derived from NADH and succinate to molecular oxygen, creating an electrochemical gradient over the inner membrane that drives transmembrane transport and the ATP synthase. Cytochrome c oxidase is the component of the respiratory chain that catalyzes the reduction of oxygen to water. Electrons originating from reduced cytochrome c in the intermembrane space (IMS) are transferred via the dinuclear copper A center (CU(A)) of subunit 2 and heme A of subunit 1 to the active site in subunit 1, a binuclear center (BNC) formed by heme A3 and copper B (CU(B)). The BNC reduces molecular oxygen to 2 water molecules using 4 electrons from cytochrome c in the IMS and 4 protons from the mitochondrial matrix. The chain is Cytochrome c oxidase subunit 5A, mitochondrial (Cox5a) from Rattus norvegicus (Rat).